The chain runs to 599 residues: Elongation factor 4 (599 aa).

One can recognise a tr-type G domain in the interval 4-186 (ENIRNFSIIA…EIVTKIPPPQ (183 aa)). GTP is bound by residues 16–21 (DHGKST) and 133–136 (NKID).

Belongs to the TRAFAC class translation factor GTPase superfamily. Classic translation factor GTPase family. LepA subfamily.

It localises to the cell inner membrane. The catalysed reaction is GTP + H2O = GDP + phosphate + H(+). In terms of biological role, required for accurate and efficient protein synthesis under certain stress conditions. May act as a fidelity factor of the translation reaction, by catalyzing a one-codon backward translocation of tRNAs on improperly translocated ribosomes. Back-translocation proceeds from a post-translocation (POST) complex to a pre-translocation (PRE) complex, thus giving elongation factor G a second chance to translocate the tRNAs correctly. Binds to ribosomes in a GTP-dependent manner. The chain is Elongation factor 4 from Geotalea uraniireducens (strain Rf4) (Geobacter uraniireducens).